The chain runs to 553 residues: Glutamate--tRNA ligase (553 aa).

A 'HIGH' region motif is present at residues 98–108 (PNPSGPLHIGH).

Belongs to the class-I aminoacyl-tRNA synthetase family. Glutamate--tRNA ligase type 2 subfamily.

It is found in the cytoplasm. The enzyme catalyses tRNA(Glu) + L-glutamate + ATP = L-glutamyl-tRNA(Glu) + AMP + diphosphate. Catalyzes the attachment of glutamate to tRNA(Glu) in a two-step reaction: glutamate is first activated by ATP to form Glu-AMP and then transferred to the acceptor end of tRNA(Glu). The polypeptide is Glutamate--tRNA ligase (Methanocaldococcus jannaschii (strain ATCC 43067 / DSM 2661 / JAL-1 / JCM 10045 / NBRC 100440) (Methanococcus jannaschii)).